The chain runs to 113 residues: Pro-corazonin (113 aa).

Residues M1–A19 form the signal peptide. Position 20 is a pyrrolidone carboxylic acid (Q20). Position 30 is an asparagine amide (N30). The tract at residues L74 to V96 is disordered. The segment covering T82–V96 has biased composition (polar residues).

It belongs to the corazonin family. As to expression, four pairs of lateral neurosecretory cells in the brains of late instar larvae, pupae and adults.

The protein localises to the secreted. Its function is as follows. Cardioactive peptide. Corazonin is probably involved in the physiological regulation of the heart beat. This Galleria mellonella (Greater wax moth) protein is Pro-corazonin.